The chain runs to 110 residues: Insulin growth factor-like family member 1 (110 aa).

An N-terminal signal peptide occupies residues M1–G24. N71 carries an N-linked (GlcNAc...) asparagine glycan.

It belongs to the IGFL family. As to quaternary structure, homodimer; disulfide-linked. As to expression, detected in ovary and spinal cord.

The protein resides in the secreted. Its function is as follows. Probable ligand of the IGFLR1 cell membrane receptor. The protein is Insulin growth factor-like family member 1 (IGFL1) of Homo sapiens (Human).